Reading from the N-terminus, the 891-residue chain is Bifunctional aldehyde-alcohol dehydrogenase AdhE (891 aa).

An aldehyde dehydrogenase region spans residues 2-440 (AVTNVAELNA…ENVGPKHLIN (439 aa)). NAD(+)-binding positions include 110 to 115 (IVPTTN), G195, and G213. The active-site Nucleophile is the C246. 2 residues coordinate NAD(+): E335 and L419. The linker stretch occupies residues 441-448 (KKTVAKRA). The interval 449 to 891 (ENMLWHKLPK…KAEKKAKKSA (443 aa)) is alcohol dehydrogenase. Residues D487, D519, 546-550 (GSPMD), 597-598 (TT), V610, K619, and L638 contribute to the NAD(+) site. Fe cation is bound by residues D653, H657, H723, and H737.

In the N-terminal section; belongs to the aldehyde dehydrogenase family. The protein in the C-terminal section; belongs to the iron-containing alcohol dehydrogenase family. As to quaternary structure, forms long filaments, called spirosomes. Fe(2+) is required as a cofactor.

It carries out the reaction acetaldehyde + NAD(+) + CoA = acetyl-CoA + NADH + H(+). It catalyses the reaction ethanol + NAD(+) = acetaldehyde + NADH + H(+). The catalysed reaction is a primary alcohol + NAD(+) = an aldehyde + NADH + H(+). Its function is as follows. Under fermentative conditions, catalyzes the sequential NADH-dependent reduction of acetyl-CoA to acetaldehyde and then to ethanol. Plays an important role in virulence and is critical for proper regulation of virulence gene expression. This chain is Bifunctional aldehyde-alcohol dehydrogenase AdhE, found in Escherichia coli O157:H7.